Reading from the N-terminus, the 816-residue chain is Nitrogen permease regulator 3 (816 aa).

The first 23 residues, 1–23 (MSSIARPPDPCLVAVVLIARSRA), serve as a signal peptide directing secretion. Disordered regions lie at residues 26–166 (RFVF…VPWE), 213–249 (WRKQ…GNDA), 262–287 (ALHP…PLDA), and 632–684 (SKGK…NRFR). Over residues 44–56 (PKARRTSRSRSRQ) the composition is skewed to basic residues. The span at 82-95 (SQNLNNSNNSNNNS) shows a compositional bias: low complexity. The span at 101–127 (RRSSNFGLDDSNTLSENQRPGSISSSR) shows a compositional bias: polar residues. A compositionally biased stretch (basic and acidic residues) spans 148-159 (DRQEDGSRESDG). Basic residues predominate over residues 214–224 (RKQRRKKKKKQ). Over residues 225-238 (RAEWESGELGHNDA) the composition is skewed to basic and acidic residues. The span at 268–282 (QRPSVPNSRSSQMSS) shows a compositional bias: polar residues. A compositionally biased stretch (basic and acidic residues) spans 641–654 (SDKEDSVNDERTEG). A compositionally biased stretch (low complexity) spans 660–676 (ASSSSSSSLASHGSGDA).

It belongs to the NPR3 family.

Functionally, mediates inactivation of the TORC1 complex in response to amino acid starvation. Required for meiotic nuclear division. The chain is Nitrogen permease regulator 3 (npr3) from Emericella nidulans (strain FGSC A4 / ATCC 38163 / CBS 112.46 / NRRL 194 / M139) (Aspergillus nidulans).